Here is a 395-residue protein sequence, read N- to C-terminus: Chaperone protein DnaJ (395 aa).

In terms of domain architecture, J spans 4–69; sequence DYYEVLGLSR…DKRRRYDQFG (66 aa). Residues 151-232 form a CR-type zinc finger; that stretch reads GVEKTLKIKK…CYGEGIKQGE (82 aa). Residues cysteine 164, cysteine 167, cysteine 180, cysteine 183, cysteine 206, cysteine 209, cysteine 220, and cysteine 223 each coordinate Zn(2+). 4 CXXCXGXG motif repeats span residues 164–171, 180–187, 206–213, and 220–227; these read CTECNGTG, CPTCHGSG, CPTCGGEG, and CVSCYGEG.

Belongs to the DnaJ family. As to quaternary structure, homodimer. The cofactor is Zn(2+).

It localises to the cytoplasm. Participates actively in the response to hyperosmotic and heat shock by preventing the aggregation of stress-denatured proteins and by disaggregating proteins, also in an autonomous, DnaK-independent fashion. Unfolded proteins bind initially to DnaJ; upon interaction with the DnaJ-bound protein, DnaK hydrolyzes its bound ATP, resulting in the formation of a stable complex. GrpE releases ADP from DnaK; ATP binding to DnaK triggers the release of the substrate protein, thus completing the reaction cycle. Several rounds of ATP-dependent interactions between DnaJ, DnaK and GrpE are required for fully efficient folding. Also involved, together with DnaK and GrpE, in the DNA replication of plasmids through activation of initiation proteins. The sequence is that of Chaperone protein DnaJ from Chlorobium phaeobacteroides (strain DSM 266 / SMG 266 / 2430).